The sequence spans 406 residues: Magnesium transporter NIPA4 (406 aa).

Topologically, residues 1–57 (MELRVANANGSCENGSIVSLYCSSQEVLCQIVRGISPEEPYNATLITWQERVRKKYG) are extracellular. Residues Asn-9, Asn-14, and Asn-42 are each glycosylated (N-linked (GlcNAc...) asparagine). The chain crosses the membrane as a helical span at residues 58-78 (FYIGVGLAFLSCFLIGTSVIL). Over 79–126 (KKKGLIRLVATGATRAVNGGYGYLKDPMWWAGMATMSAGEVANFGAYA) the chain is Cytoplasmic. A helical transmembrane segment spans residues 127-147 (FAPATVVTPLGALSVLISAIF). At 148 to 155 (SSYCLGES) the chain is on the extracellular side. Residues 156 to 176 (LNLLGKLGCVICMAGSTVMVI) form a helical membrane-spanning segment. Residues 177 to 197 (HAPKEEKVTTVAEMASKMKDT) lie on the Cytoplasmic side of the membrane. Residues 198-218 (GFIVFAVLLVVSCLILIFIVA) traverse the membrane as a helical segment. The Extracellular portion of the chain corresponds to 219–225 (PRYGQRN). The helical transmembrane segment at 226 to 246 (ILIYIIICSVIGSFSVTAVKG) threads the bilayer. Topologically, residues 247-263 (LGVTIRNFFQGLPVVRH) are cytoplasmic. A helical membrane pass occupies residues 264–284 (PLPYILSLILGLSIIIQVNFL). Residues 285 to 295 (NRALDIFNTSL) lie on the Extracellular side of the membrane. Asn-292 is a glycosylation site (N-linked (GlcNAc...) asparagine). Residues 296 to 316 (VFPIYYVFFTTVVVASSIVLF) form a helical membrane-spanning segment. Residues 317 to 326 (KEWYTMSAVD) lie on the Cytoplasmic side of the membrane. The helical transmembrane segment at 327-347 (IVGTLSGFVTIILGVFMLHAF) threads the bilayer. Topologically, residues 348–406 (KDLDINQISLPHTHKNPTPAPAPEPTVIKLEDKNVLVDNIELASTPSPQQKPKVFMTDS) are extracellular.

The protein belongs to the NIPA family.

The protein localises to the cell membrane. It catalyses the reaction Mg(2+)(in) = Mg(2+)(out). Functionally, acts as a Mg(2+) transporter. Can also transport other divalent cations such as Ba(2+), Sr(2+) and Fe(2+) but to a much less extent than Mg(2+). May be a receptor for ligands (trioxilins A3 and B3) from the hepoxilin pathway. This is Magnesium transporter NIPA4 (Nipal4) from Mus musculus (Mouse).